A 374-amino-acid chain; its full sequence is N-acetyldiaminopimelate deacetylase (374 aa).

Residue D69 is part of the active site. The active-site Proton acceptor is E128.

It belongs to the peptidase M20A family. N-acetyldiaminopimelate deacetylase subfamily.

It catalyses the reaction N-acetyl-(2S,6S)-2,6-diaminopimelate + H2O = (2S,6S)-2,6-diaminopimelate + acetate. It functions in the pathway amino-acid biosynthesis; L-lysine biosynthesis via DAP pathway; LL-2,6-diaminopimelate from (S)-tetrahydrodipicolinate (acetylase route): step 3/3. Its function is as follows. Catalyzes the conversion of N-acetyl-diaminopimelate to diaminopimelate and acetate. This Bacillus subtilis (strain 168) protein is N-acetyldiaminopimelate deacetylase (ykuR).